Consider the following 151-residue polypeptide: MSKYQKKSDGELKRTLTKLQYDVTQNAHTEPPYTNEYNRHYEKGIYVDITSGEPLFISTDKFKSGCGWPAFTKPISQDLIANYRDESHGMIRTEVRAKNSNSHLGHVFRDGPEEHGGLRYCINSAALKFIPFAEMESAGYGEYLKLFKESN.

Residues 9–132 (DGELKRTLTK…NSAALKFIPF (124 aa)) form the MsrB domain. C121 acts as the Nucleophile in catalysis.

The protein belongs to the MsrB Met sulfoxide reductase family.

The catalysed reaction is L-methionyl-[protein] + [thioredoxin]-disulfide + H2O = L-methionyl-(R)-S-oxide-[protein] + [thioredoxin]-dithiol. The polypeptide is Peptide methionine sulfoxide reductase MsrB (Mycoplasma pneumoniae (strain ATCC 29342 / M129 / Subtype 1) (Mycoplasmoides pneumoniae)).